Reading from the N-terminus, the 141-residue chain is Holo-[acyl-carrier-protein] synthase (141 aa).

Residues Asp-7 and Glu-57 each coordinate Mg(2+).

This sequence belongs to the P-Pant transferase superfamily. AcpS family. Mg(2+) serves as cofactor.

Its subcellular location is the cytoplasm. The catalysed reaction is apo-[ACP] + CoA = holo-[ACP] + adenosine 3',5'-bisphosphate + H(+). In terms of biological role, transfers the 4'-phosphopantetheine moiety from coenzyme A to a Ser of acyl-carrier-protein. The protein is Holo-[acyl-carrier-protein] synthase of Corynebacterium efficiens (strain DSM 44549 / YS-314 / AJ 12310 / JCM 11189 / NBRC 100395).